The chain runs to 40 residues: Snaclec LmrLEC-1 (40 aa).

Cysteine 2 and cysteine 13 are disulfide-bonded.

This sequence belongs to the snaclec family. In terms of assembly, dimer (non-covalently linked) of heterodimers of subunits alpha and beta (disulfide-linked). In terms of tissue distribution, expressed by the venom gland.

Its subcellular location is the secreted. Interferes with one step of hemostasis (modulation of platelet aggregation, or coagulation cascade, for example). The polypeptide is Snaclec LmrLEC-1 (Lachesis muta rhombeata (Bushmaster)).